Consider the following 229-residue polypeptide: Triosephosphate isomerase (229 aa).

Residue 6-8 (NFK) participates in substrate binding. The Electrophile role is filled by H88. Catalysis depends on E157, which acts as the Proton acceptor. Substrate-binding residues include G163 and S193.

It belongs to the triosephosphate isomerase family. Homodimer.

The protein localises to the cytoplasm. It carries out the reaction D-glyceraldehyde 3-phosphate = dihydroxyacetone phosphate. It participates in carbohydrate biosynthesis; gluconeogenesis. It functions in the pathway carbohydrate degradation; glycolysis; D-glyceraldehyde 3-phosphate from glycerone phosphate: step 1/1. Its function is as follows. Involved in the gluconeogenesis. Catalyzes stereospecifically the conversion of dihydroxyacetone phosphate (DHAP) to D-glyceraldehyde-3-phosphate (G3P). The polypeptide is Triosephosphate isomerase (Sulfurovum sp. (strain NBC37-1)).